A 389-amino-acid chain; its full sequence is UDP-N-acetylglucosamine--N-acetylmuramyl-(pentapeptide) pyrophosphoryl-undecaprenol N-acetylglucosamine transferase (389 aa).

UDP-N-acetyl-alpha-D-glucosamine-binding positions include 17–19, asparagine 137, arginine 179, serine 213, and glutamine 308; that span reads TAG.

Belongs to the glycosyltransferase 28 family. MurG subfamily.

The protein resides in the cell membrane. It carries out the reaction di-trans,octa-cis-undecaprenyl diphospho-N-acetyl-alpha-D-muramoyl-L-alanyl-D-glutamyl-meso-2,6-diaminopimeloyl-D-alanyl-D-alanine + UDP-N-acetyl-alpha-D-glucosamine = di-trans,octa-cis-undecaprenyl diphospho-[N-acetyl-alpha-D-glucosaminyl-(1-&gt;4)]-N-acetyl-alpha-D-muramoyl-L-alanyl-D-glutamyl-meso-2,6-diaminopimeloyl-D-alanyl-D-alanine + UDP + H(+). Its pathway is cell wall biogenesis; peptidoglycan biosynthesis. In terms of biological role, cell wall formation. Catalyzes the transfer of a GlcNAc subunit on undecaprenyl-pyrophosphoryl-MurNAc-pentapeptide (lipid intermediate I) to form undecaprenyl-pyrophosphoryl-MurNAc-(pentapeptide)GlcNAc (lipid intermediate II). The protein is UDP-N-acetylglucosamine--N-acetylmuramyl-(pentapeptide) pyrophosphoryl-undecaprenol N-acetylglucosamine transferase of Rhodococcus erythropolis (strain PR4 / NBRC 100887).